The primary structure comprises 71 residues: Large ribosomal subunit protein uL29 (71 aa).

The segment at 32-51 (GVNKSTGGAPSNPGKISETK) is disordered.

It belongs to the universal ribosomal protein uL29 family.

This chain is Large ribosomal subunit protein uL29, found in Methanococcus maripaludis (strain DSM 14266 / JCM 13030 / NBRC 101832 / S2 / LL).